The following is a 507-amino-acid chain: ATP synthase subunit alpha, plastid (507 aa).

170–177 (GDRQTGKT) contributes to the ATP binding site.

This sequence belongs to the ATPase alpha/beta chains family. As to quaternary structure, F-type ATPases have 2 components, CF(1) - the catalytic core - and CF(0) - the membrane proton channel. CF(1) has five subunits: alpha(3), beta(3), gamma(1), delta(1), epsilon(1). CF(0) has four main subunits: a, b, b' and c.

The protein resides in the plastid membrane. The catalysed reaction is ATP + H2O + 4 H(+)(in) = ADP + phosphate + 5 H(+)(out). In terms of biological role, produces ATP from ADP in the presence of a proton gradient across the membrane. The alpha chain is a regulatory subunit. This Cuscuta obtusiflora (Peruvian dodder) protein is ATP synthase subunit alpha, plastid.